A 440-amino-acid chain; its full sequence is Golgi reassembly-stacking protein 1 (440 aa).

Residue Gly-2 is the site of N-myristoyl glycine attachment. PDZ GRASP-type domains follow at residues 15-105 and 111-199; these read EGFH…FCSF and QVWH…YGYL. Residues 15 to 215 form a GRASP region; sequence EGFHLHGVQE…PPSYHKKPPG (201 aa). Zn(2+)-binding residues include His-18, His-20, and Cys-103. The essential for interaction with GOLGA2/GM130 stretch occupies residues 190–202; that stretch reads LGCGIGYGYLHRI. Disordered regions lie at residues 205-248, 261-301, and 327-440; these read QPPS…ETGS, PGSS…PVQR, and LPSS…STTE. A compositionally biased stretch (pro residues) spans 214–239; sequence PGTPPPSALPLGAPPPDALPPGPTPE. Residue Thr-216 is modified to Phosphothreonine. Positions 327–336 are enriched in low complexity; that stretch reads LPSSTELTTT. Positions 337 to 351 are enriched in polar residues; sequence AVSTSGPEDICSSSS. A phosphoserine mark is found at Ser-362, Ser-364, and Ser-373.

This sequence belongs to the GORASP family. In terms of assembly, homodimer. Forms higher-order oligomers under interphase but not mitotic conditions. Dimers of the protein on one membrane might be able to interact with dimers on another and so stack cisternae. Interacts with the C-terminus of GOLGA2/GM130 under both mitotic and non-mitotic conditions. The interaction is critical for the correct targeting of both proteins to the cis-Golgi. Interacts with TMED2 and TMED3. In terms of processing, phosphorylated by CDC2/B1 and PLK kinases during mitosis. Phosphorylation cycle correlates with the cisternal stacking cycle. Phosphorylation of the homodimer prevents the association of dimers into higher-order oligomers, leading to cisternal unstacking. Post-translationally, target for caspase-3 cleavage during apoptosis. The cleavage contributes to Golgi fragmentation and occurs very early in the execution phase of apoptosis. Myristoylated.

The protein localises to the golgi apparatus. Its subcellular location is the cis-Golgi network membrane. The protein resides in the endoplasmic reticulum-Golgi intermediate compartment membrane. Functionally, key structural protein of the Golgi apparatus. The membrane cisternae of the Golgi apparatus adhere to each other to form stacks, which are aligned side by side to form the Golgi ribbon. Acting in concert with GORASP2/GRASP55, is required for the formation and maintenance of the Golgi ribbon, and may be dispensable for the formation of stacks. However, other studies suggest that GORASP1 plays an important role in assembly and membrane stacking of the cisternae, and in the reassembly of Golgi stacks after breakdown during mitosis. Caspase-mediated cleavage of GORASP1 is required for fragmentation of the Golgi during apoptosis. Also mediates, via its interaction with GOLGA2/GM130, the docking of transport vesicles with the Golgi membranes. Mediates ER stress-induced unconventional (ER/Golgi-independent) trafficking of core-glycosylated CFTR to cell membrane. The protein is Golgi reassembly-stacking protein 1 (GORASP1) of Homo sapiens (Human).